A 264-amino-acid polypeptide reads, in one-letter code: Small ribosomal subunit protein uS2 (264 aa).

A disordered region spans residues 233 to 264 (AQTQAGGKAEQEAPATEEAADAQTEEAATPAE).

It belongs to the universal ribosomal protein uS2 family.

This is Small ribosomal subunit protein uS2 from Psychrobacter arcticus (strain DSM 17307 / VKM B-2377 / 273-4).